Consider the following 89-residue polypeptide: Small ribosomal subunit protein uS15 (89 aa).

Belongs to the universal ribosomal protein uS15 family. In terms of assembly, part of the 30S ribosomal subunit. Forms a bridge to the 50S subunit in the 70S ribosome, contacting the 23S rRNA.

Functionally, one of the primary rRNA binding proteins, it binds directly to 16S rRNA where it helps nucleate assembly of the platform of the 30S subunit by binding and bridging several RNA helices of the 16S rRNA. Forms an intersubunit bridge (bridge B4) with the 23S rRNA of the 50S subunit in the ribosome. The chain is Small ribosomal subunit protein uS15 from Streptococcus suis (strain 98HAH33).